Reading from the N-terminus, the 116-residue chain is Large ribosomal subunit protein bL17 (116 aa).

This sequence belongs to the bacterial ribosomal protein bL17 family. Part of the 50S ribosomal subunit. Contacts protein L32.

The chain is Large ribosomal subunit protein bL17 from Chloroflexus aurantiacus (strain ATCC 29366 / DSM 635 / J-10-fl).